A 426-amino-acid chain; its full sequence is Protein EARLY STARVATION 1, chloroplastic (426 aa).

A chloroplast-targeting transit peptide spans 1 to 58 (MSEMAASSAISLLDIKLRRFGVGASNHELRLTKWFKGDQAGAPTRRFTCFADMLAPIR). Disordered stretches follow at residues 106–127 (CTPR…TGIA) and 396–426 (QPRE…DQPQ). Basic and acidic residues predominate over residues 118–127 (TPPKRDTGIA). The span at 412 to 426 (PSPPPEPDLPPDQPQ) shows a compositional bias: pro residues.

This sequence belongs to the ESV1 family.

The protein resides in the plastid. It is found in the chloroplast stroma. It localises to the plastid stroma. Functionally, binds preferentially to highly ordered alpha-glucans, such as starch and crystalline maltodextrins. Involved in the organization of the starch granule matrix, thus influencing starch turnover by modulating the accessibility of starch polymers to modifying and degrading enzymes involved in phosphorylation, hydrolyzes and synthesis, including starch synthases (SSI and SSIII), starch phosphorylases (PHS1), isoamylase, beta-amylase, glucan water dikinase (GWD) and phosphoglucan water dikinase (PWD). Prevents GWD- and PWD-mediated starch phosphorylation, and subsequent degradation. Required for the control of starch degradation in leaves and starch distribution in nonphotosynthetic parts (e.g. cells immediately adjacent to veins, columella cells of root caps, stems, flowers and siliques) by limiting the hasty depletion of starch reserves during the night. Promotes gravitropic responses, negative in shoots but positive in roots, by maintaining starch granules (statoliths) accumulation in hypocotyls and roots columella, especially in dark conditions and in the endodermis, where starch is formed from transported glucose-6-phosphates. This chain is Protein EARLY STARVATION 1, chloroplastic, found in Arabidopsis thaliana (Mouse-ear cress).